The chain runs to 393 residues: Protein TsgA (393 aa).

12 helical membrane-spanning segments follow: residues 11–31, 51–71, 78–98, 101–121, 134–154, 162–182, 206–226, 245–265, 273–293, 298–318, 332–352, and 361–381; these read WISF…GMVM, FLNA…EIVP, FGFI…SLAL, AAMF…TFLI, LLFT…VAAF, WYWV…LTFG, IGVL…LGFI, ALVS…SFIL, ILTV…TGTQ, WFIL…ITLG, FILT…GPIV, and LLTA…LGFV.

This sequence belongs to the major facilitator superfamily. TsgA family.

Its subcellular location is the cell inner membrane. This is Protein TsgA from Salmonella gallinarum (strain 287/91 / NCTC 13346).